A 505-amino-acid chain; its full sequence is Probable cytochrome P450 28c1 (505 aa).

Position 444 (cysteine 444) interacts with heme.

This sequence belongs to the cytochrome P450 family. The cofactor is heme.

It is found in the endoplasmic reticulum membrane. It localises to the microsome membrane. In terms of biological role, may be involved in the metabolism of insect hormones and in the breakdown of synthetic insecticides. This Drosophila melanogaster (Fruit fly) protein is Probable cytochrome P450 28c1 (Cyp28c1).